The following is a 118-amino-acid chain: Non-specific lipid-transfer protein 2A (118 aa).

The signal sequence occupies residues 1 to 26; it reads MARAQLVLVALVAAALLLAGPHTTMA. 4 disulfides stabilise this stretch: Cys-30–Cys-77, Cys-40–Cys-54, Cys-55–Cys-100, and Cys-75–Cys-114.

It belongs to the plant LTP family.

Plant non-specific lipid-transfer proteins transfer phospholipids as well as galactolipids across membranes. May play a role in wax or cutin deposition in the cell walls of expanding epidermal cells and certain secretory tissues. This chain is Non-specific lipid-transfer protein 2A (LTP2-A), found in Oryza sativa subsp. japonica (Rice).